The chain runs to 525 residues: Asparagine synthetase [glutamine-hydrolyzing] (525 aa).

The active-site For GATase activity is the cysteine 2. The Glutamine amidotransferase type-2 domain occupies 2–185; it reads CGILAVLGCS…PGHLYSSKEG (184 aa). Residues 50–54, 75–77, and aspartate 98 each bind L-glutamine; these read RLAII and NGE. One can recognise an Asparagine synthetase domain in the interval 193 to 517; sequence PPWFSEVIPS…QIDSPWRSKC (325 aa). Residues leucine 231, valine 267, and 341–342 contribute to the ATP site; that span reads SG.

It catalyses the reaction L-aspartate + L-glutamine + ATP + H2O = L-asparagine + L-glutamate + AMP + diphosphate + H(+). It functions in the pathway amino-acid biosynthesis; L-asparagine biosynthesis; L-asparagine from L-aspartate (L-Gln route): step 1/1. Could play a role in remobilization of nitrogen in flowers during senescence. This chain is Asparagine synthetase [glutamine-hydrolyzing] (AND1), found in Sandersonia aurantiaca (Christmas-bells).